Reading from the N-terminus, the 1412-residue chain is DNA-directed RNA polymerase subunit beta' (1412 aa).

Positions 70, 72, 85, and 88 each coordinate Zn(2+). The Mg(2+) site is built by Asp-460, Asp-462, and Asp-464. Cys-819, Cys-893, Cys-900, and Cys-903 together coordinate Zn(2+). Residues Glu-1392–Glu-1412 are disordered.

The protein belongs to the RNA polymerase beta' chain family. The RNAP catalytic core consists of 2 alpha, 1 beta, 1 beta' and 1 omega subunit. When a sigma factor is associated with the core the holoenzyme is formed, which can initiate transcription. Mg(2+) is required as a cofactor. Zn(2+) serves as cofactor.

The catalysed reaction is RNA(n) + a ribonucleoside 5'-triphosphate = RNA(n+1) + diphosphate. Functionally, DNA-dependent RNA polymerase catalyzes the transcription of DNA into RNA using the four ribonucleoside triphosphates as substrates. The polypeptide is DNA-directed RNA polymerase subunit beta' (Burkholderia thailandensis (strain ATCC 700388 / DSM 13276 / CCUG 48851 / CIP 106301 / E264)).